The sequence spans 1012 residues: Ubiquitin-activating enzyme E1 1 (1012 aa).

An ATP-binding site is contributed by R22. S264 carries the phosphoserine modification. ATP is bound by residues A437 and D463. Residues D465 and E468 each contribute to the Mg(2+) site. 6 residues coordinate ATP: N471, R474, K487, V513, D537, and N538. D537 contacts Mg(2+). A Glycyl lysine isopeptide (Lys-Gly) (interchain with G-Cter in ubiquitin) cross-link involves residue K588. The Glycyl thioester intermediate role is filled by C593. The residue at position 903 (S903) is a Phosphoserine.

Belongs to the ubiquitin-activating E1 family. As to quaternary structure, monomer. Interacts with the E2 ubiquitin-conjugating enzyme ubc4.

The protein resides in the cytoplasm. It localises to the nucleus. It carries out the reaction ATP + ubiquitin + [E1 ubiquitin-activating enzyme]-L-cysteine = AMP + diphosphate + S-ubiquitinyl-[E1 ubiquitin-activating enzyme]-L-cysteine.. The protein operates within protein modification; protein ubiquitination. Ubiquitin transfer between the E1 ubiquitin-activating enzyme ptr3 and E2 ubiquitin-conjugating enzyme ubc4 is enhanced by the presence of magnesium and ATP, or adenylated ubiquitin. Functionally, E1 ubiquitin-activating enzyme that catalyzes the first step in ubiquitin conjugation to mark cellular proteins for degradation through the ubiquitin-proteasome system. Activates ubiquitin by first adenylating its C-terminal glycine residue with ATP, and thereafter linking this residue to the side chain of a cysteine residue in E1, yielding a ubiquitin-E1 thioester and free AMP. The protein is Ubiquitin-activating enzyme E1 1 (ptr3) of Schizosaccharomyces pombe (strain 972 / ATCC 24843) (Fission yeast).